A 57-amino-acid polypeptide reads, in one-letter code: uncharacterized protein (57 aa).

The helical transmembrane segment at 34 to 54 threads the bilayer; it reads AALLDAAALVVIPGLLTAAAV.

The protein localises to the membrane. This is an uncharacterized protein from Dictyostelium discoideum (Social amoeba).